Here is a 302-residue protein sequence, read N- to C-terminus: Geranylgeranyl diphosphate synthase (302 aa).

Positions 53, 56, and 87 each coordinate isopentenyl diphosphate. Residues Asp94 and Asp100 each coordinate Mg(2+). Arg105 serves as a coordination point for (2E,6E)-farnesyl diphosphate. Arg106 lines the isopentenyl diphosphate pocket. Residues Lys189, Thr190, and Gln227 each coordinate (2E,6E)-farnesyl diphosphate.

It belongs to the FPP/GGPP synthase family. It depends on Mg(2+) as a cofactor.

The enzyme catalyses isopentenyl diphosphate + (2E,6E)-farnesyl diphosphate = (2E,6E,10E)-geranylgeranyl diphosphate + diphosphate. It participates in isoprenoid biosynthesis; geranylgeranyl diphosphate biosynthesis; geranylgeranyl diphosphate from farnesyl diphosphate and isopentenyl diphosphate: step 1/1. Its function is as follows. Catalyzes the condensation of farnesyl diphosphate (FPP) and isopentenyl diphosphate (IPP) to yield geranylgeranyl diphosphate (GGPP) needed for biosynthesis of carotenoids and diterpenes. This is Geranylgeranyl diphosphate synthase (crtE) from Pantoea ananas (Erwinia uredovora).